The following is a 190-amino-acid chain: Bifunctional protein PyrR (190 aa).

A PRPP-binding motif is present at residues 107–119; the sequence is IILVDDVLYSGRT.

The protein belongs to the purine/pyrimidine phosphoribosyltransferase family. PyrR subfamily.

It catalyses the reaction UMP + diphosphate = 5-phospho-alpha-D-ribose 1-diphosphate + uracil. Regulates the transcription of the pyrimidine nucleotide (pyr) operon in response to exogenous pyrimidines. In terms of biological role, also displays a weak uracil phosphoribosyltransferase activity which is not physiologically significant. This chain is Bifunctional protein PyrR, found in Corynebacterium diphtheriae (strain ATCC 700971 / NCTC 13129 / Biotype gravis).